The chain runs to 332 residues: Glycerol-3-phosphate dehydrogenase [NAD(P)+] (332 aa).

Trp-11, Arg-30, and Lys-108 together coordinate NADPH. Lys-108, Gly-137, and Ser-139 together coordinate sn-glycerol 3-phosphate. Residue Ala-141 participates in NADPH binding. Residues Lys-192, Asp-245, Ser-255, Arg-256, and Asn-257 each contribute to the sn-glycerol 3-phosphate site. Lys-192 functions as the Proton acceptor in the catalytic mechanism. Arg-256 provides a ligand contact to NADPH. Val-280 and Glu-282 together coordinate NADPH.

This sequence belongs to the NAD-dependent glycerol-3-phosphate dehydrogenase family.

The protein localises to the cytoplasm. The enzyme catalyses sn-glycerol 3-phosphate + NAD(+) = dihydroxyacetone phosphate + NADH + H(+). The catalysed reaction is sn-glycerol 3-phosphate + NADP(+) = dihydroxyacetone phosphate + NADPH + H(+). It participates in membrane lipid metabolism; glycerophospholipid metabolism. Functionally, catalyzes the reduction of the glycolytic intermediate dihydroxyacetone phosphate (DHAP) to sn-glycerol 3-phosphate (G3P), the key precursor for phospholipid synthesis. This is Glycerol-3-phosphate dehydrogenase [NAD(P)+] from Burkholderia cenocepacia (strain ATCC BAA-245 / DSM 16553 / LMG 16656 / NCTC 13227 / J2315 / CF5610) (Burkholderia cepacia (strain J2315)).